Consider the following 440-residue polypeptide: Transposon Ty1-ER2 Gag polyprotein (440 aa).

3 stretches are compositionally biased toward polar residues: residues 1–10 (MESQQLSNYP), 48–60 (TKANSQQTTTPAS), and 127–152 (QSQFPQYPSSVGTPLSTPSPESGNTF). Disordered stretches follow at residues 1 to 93 (MESQ…MMTQ), 126 to 173 (PQSQ…RPPP), and 352 to 440 (GSRN…PETY). Residues 153 to 165 (TDSSSADSDMTST) are compositionally biased toward low complexity. The tract at residues 299 to 401 (NNGIHINNKV…NSKSKTARAH (103 aa)) is RNA-binding. Residues 402 to 418 (NVSTSNNSPSTDNDSIS) are compositionally biased toward low complexity. Ser416 is modified (phosphoserine). Positions 419-428 (KSTTEPIQLN) are enriched in polar residues. Over residues 429-440 (NKHDLHLRPETY) the composition is skewed to basic and acidic residues.

As to quaternary structure, homotrimer.

Its subcellular location is the cytoplasm. Capsid protein (CA) is the structural component of the virus-like particle (VLP), forming the shell that encapsulates the retrotransposons dimeric RNA genome. The particles are assembled from trimer-clustered units and there are holes in the capsid shells that allow for the diffusion of macromolecules. CA also has nucleocapsid-like chaperone activity, promoting primer tRNA(i)-Met annealing to the multipartite primer-binding site (PBS), dimerization of Ty1 RNA and initiation of reverse transcription. This chain is Transposon Ty1-ER2 Gag polyprotein (TY1A-ER2), found in Saccharomyces cerevisiae (strain ATCC 204508 / S288c) (Baker's yeast).